The following is a 356-amino-acid chain: S-adenosylmethionine:tRNA ribosyltransferase-isomerase (356 aa).

It belongs to the QueA family. As to quaternary structure, monomer.

It is found in the cytoplasm. The catalysed reaction is 7-aminomethyl-7-carbaguanosine(34) in tRNA + S-adenosyl-L-methionine = epoxyqueuosine(34) in tRNA + adenine + L-methionine + 2 H(+). Its pathway is tRNA modification; tRNA-queuosine biosynthesis. Its function is as follows. Transfers and isomerizes the ribose moiety from AdoMet to the 7-aminomethyl group of 7-deazaguanine (preQ1-tRNA) to give epoxyqueuosine (oQ-tRNA). In Yersinia pseudotuberculosis serotype IB (strain PB1/+), this protein is S-adenosylmethionine:tRNA ribosyltransferase-isomerase.